Consider the following 31-residue polypeptide: Photosystem II reaction center protein T (31 aa).

The helical transmembrane segment at 3–23 threads the bilayer; sequence AFSYVLILTLALVTLFFAVAF.

It belongs to the PsbT family. In terms of assembly, PSII is composed of 1 copy each of membrane proteins PsbA, PsbB, PsbC, PsbD, PsbE, PsbF, PsbH, PsbI, PsbJ, PsbK, PsbL, PsbM, PsbT, PsbX, PsbY, Psb30/Ycf12, peripheral proteins PsbO, CyanoQ (PsbQ), PsbU, PsbV and a large number of cofactors. It forms dimeric complexes.

Its subcellular location is the cellular thylakoid membrane. In terms of biological role, found at the monomer-monomer interface of the photosystem II (PS II) dimer, plays a role in assembly and dimerization of PSII. PSII is a light-driven water plastoquinone oxidoreductase, using light energy to abstract electrons from H(2)O, generating a proton gradient subsequently used for ATP formation. In Prochlorococcus marinus (strain NATL2A), this protein is Photosystem II reaction center protein T.